The primary structure comprises 64 residues: Large ribosomal subunit protein bL33 (64 aa).

Belongs to the bacterial ribosomal protein bL33 family.

The sequence is that of Large ribosomal subunit protein bL33 from Crocosphaera subtropica (strain ATCC 51142 / BH68) (Cyanothece sp. (strain ATCC 51142)).